Here is a 126-residue protein sequence, read N- to C-terminus: Holo-[acyl-carrier-protein] synthase (126 aa).

Mg(2+) is bound by residues aspartate 9 and glutamate 58.

This sequence belongs to the P-Pant transferase superfamily. AcpS family. Mg(2+) is required as a cofactor.

It localises to the cytoplasm. It carries out the reaction apo-[ACP] + CoA = holo-[ACP] + adenosine 3',5'-bisphosphate + H(+). Its function is as follows. Transfers the 4'-phosphopantetheine moiety from coenzyme A to a Ser of acyl-carrier-protein. The sequence is that of Holo-[acyl-carrier-protein] synthase from Buchnera aphidicola subsp. Acyrthosiphon pisum (strain APS) (Acyrthosiphon pisum symbiotic bacterium).